Consider the following 567-residue polypeptide: Eukaryotic translation initiation factor 3 subunit D (567 aa).

2 disordered regions span residues 12–34 and 122–160; these read PVKSAWGPPETEQIGGDIPYAPF and GQNVQRGGRGGRYGSSGGRGAGDTVVSRSSGAGGARGRR. Gly residues predominate over residues 128 to 142; that stretch reads GGRGGRYGSSGGRGA. Positions 300-314 are RNA gate; the sequence is PFDYLTVNENAYDSP.

Belongs to the eIF-3 subunit D family. As to quaternary structure, component of the eukaryotic translation initiation factor 3 (eIF-3) complex. The eIF-3 complex appears to include tif32/eif3a, SPAC25G10.08/eif3b, tif33/eif3c, SPBC4C3.07/eif3f, tif35/eif3g and sum1/eif3i. This set of common subunits may also associate exclusively with either moe1/eif3d and int6/eif3e, or with SPAC821.05/eif3h and SPAC1751.03/eif3m. The eIF-3 complex may also include SPAC3A12.13c/eif3j.

It is found in the cytoplasm. In terms of biological role, mRNA cap-binding component of the eukaryotic translation initiation factor 3 (eIF-3) complex, which is involved in protein synthesis of a specialized repertoire of mRNAs and, together with other initiation factors, stimulates binding of mRNA and methionyl-tRNAi to the 40S ribosome. The eIF-3 complex specifically targets and initiates translation of a subset of mRNAs involved in cell proliferation. In the eIF-3 complex, eif3d specifically recognizes and binds the 7-methylguanosine cap of a subset of mRNAs. The protein is Eukaryotic translation initiation factor 3 subunit D (moe1) of Schizosaccharomyces pombe (strain 972 / ATCC 24843) (Fission yeast).